The chain runs to 353 residues: Photosystem II D2 protein (353 aa).

Residue threonine 2 is modified to N-acetylthreonine. The residue at position 2 (threonine 2) is a Phosphothreonine. The helical transmembrane segment at 41–61 (CAYFALGGWFTGTTFVTSWYT) threads the bilayer. Histidine 118 lines the chlorophyll a pocket. A helical membrane pass occupies residues 125–141 (GFMLRQFELARSVQLRP). 2 residues coordinate pheophytin a: glutamine 130 and asparagine 143. Residues 153-166 (VFVSVFLIYPLGQS) form a helical membrane-spanning segment. Histidine 198 contributes to the chlorophyll a binding site. The chain crosses the membrane as a helical span at residues 208–228 (AALLCAIHGATVENTLFEDGD). The a plastoquinone site is built by histidine 215 and phenylalanine 262. Histidine 215 provides a ligand contact to Fe cation. Histidine 269 is a Fe cation binding site. A helical membrane pass occupies residues 279-295 (GLWMSALGVVGLALNLR).

The protein belongs to the reaction center PufL/M/PsbA/D family. As to quaternary structure, PSII is composed of 1 copy each of membrane proteins PsbA, PsbB, PsbC, PsbD, PsbE, PsbF, PsbH, PsbI, PsbJ, PsbK, PsbL, PsbM, PsbT, PsbX, PsbY, PsbZ, Psb30/Ycf12, at least 3 peripheral proteins of the oxygen-evolving complex and a large number of cofactors. It forms dimeric complexes. The D1/D2 heterodimer binds P680, chlorophylls that are the primary electron donor of PSII, and subsequent electron acceptors. It shares a non-heme iron and each subunit binds pheophytin, quinone, additional chlorophylls, carotenoids and lipids. There is also a Cl(-1) ion associated with D1 and D2, which is required for oxygen evolution. The PSII complex binds additional chlorophylls, carotenoids and specific lipids. is required as a cofactor.

Its subcellular location is the plastid. The protein localises to the chloroplast thylakoid membrane. It catalyses the reaction 2 a plastoquinone + 4 hnu + 2 H2O = 2 a plastoquinol + O2. Its function is as follows. Photosystem II (PSII) is a light-driven water:plastoquinone oxidoreductase that uses light energy to abstract electrons from H(2)O, generating O(2) and a proton gradient subsequently used for ATP formation. It consists of a core antenna complex that captures photons, and an electron transfer chain that converts photonic excitation into a charge separation. The D1/D2 (PsbA/PsbD) reaction center heterodimer binds P680, the primary electron donor of PSII as well as several subsequent electron acceptors. D2 is needed for assembly of a stable PSII complex. The protein is Photosystem II D2 protein of Dioscorea elephantipes (Elephant's foot yam).